We begin with the raw amino-acid sequence, 604 residues long: Rhotekin-2 (604 aa).

One can recognise an REM-1 domain in the interval 1-74; it reads MEGQLLRGLA…LQKSKEEIAN (74 aa). Positions 53–79 form a coiled coil; that stretch reads VCSARIQAYTAELQKSKEEIANQTGAR. In terms of domain architecture, PH spans 281–387; it reads ADAFAGFLNE…WMGAFRQHFF (107 aa). A disordered region spans residues 481 to 590; sequence LSPIGEPAPD…PVPVPRQKSI (110 aa). Positions 514–527 are enriched in polar residues; that stretch reads GRANQSKDSATQAG. A compositionally biased stretch (low complexity) spans 529–543; that stretch reads SGASSSPSDPRLSPP.

May play an important role in lymphopoiesis. The chain is Rhotekin-2 (Rtkn2) from Mus musculus (Mouse).